Here is a 294-residue protein sequence, read N- to C-terminus: tRNA dimethylallyltransferase (294 aa).

9 to 16 (GATATGKS) is an ATP binding site. 11–16 (TATGKS) provides a ligand contact to substrate. The interaction with substrate tRNA stretch occupies residues 34–37 (DSRQ).

Belongs to the IPP transferase family. Monomer. It depends on Mg(2+) as a cofactor.

The enzyme catalyses adenosine(37) in tRNA + dimethylallyl diphosphate = N(6)-dimethylallyladenosine(37) in tRNA + diphosphate. Catalyzes the transfer of a dimethylallyl group onto the adenine at position 37 in tRNAs that read codons beginning with uridine, leading to the formation of N6-(dimethylallyl)adenosine (i(6)A). The polypeptide is tRNA dimethylallyltransferase (Trichormus variabilis (strain ATCC 29413 / PCC 7937) (Anabaena variabilis)).